The sequence spans 140 residues: HTH-type transcriptional regulator AdhR (140 aa).

Residues 1–69 (MNIAQVAKQF…IEALIEYTTL (69 aa)) form the HTH merR-type domain. The segment at residues 3–22 (IAQVAKQFGLTAATLRYYER) is a DNA-binding region (H-T-H motif). Residues 75 to 125 (RTVEARKNILADERQRLIEKRKEIDETIKRLDTKIKDYDGKLRENEAKLKS) adopt a coiled-coil conformation. The disordered stretch occupies residues 120 to 140 (EAKLKSRPKTESLHGSVEQRR).

Its function is as follows. Transcriptional regulator involved in the response to aldehyde stress. Binds to the promoter region of the adhA-yraA operon, the yraC and its own promoter region; binding is unchanged in the presence of aldehydes. This Bacillus subtilis (strain 168) protein is HTH-type transcriptional regulator AdhR (adhR).